The following is a 156-amino-acid chain: ATP synthase subunit b (156 aa).

A helical transmembrane segment spans residues 11–31 (LIAFALFVWFCMKFVWPPIIN).

Belongs to the ATPase B chain family. In terms of assembly, F-type ATPases have 2 components, F(1) - the catalytic core - and F(0) - the membrane proton channel. F(1) has five subunits: alpha(3), beta(3), gamma(1), delta(1), epsilon(1). F(0) has three main subunits: a(1), b(2) and c(10-14). The alpha and beta chains form an alternating ring which encloses part of the gamma chain. F(1) is attached to F(0) by a central stalk formed by the gamma and epsilon chains, while a peripheral stalk is formed by the delta and b chains.

The protein localises to the cell inner membrane. In terms of biological role, f(1)F(0) ATP synthase produces ATP from ADP in the presence of a proton or sodium gradient. F-type ATPases consist of two structural domains, F(1) containing the extramembraneous catalytic core and F(0) containing the membrane proton channel, linked together by a central stalk and a peripheral stalk. During catalysis, ATP synthesis in the catalytic domain of F(1) is coupled via a rotary mechanism of the central stalk subunits to proton translocation. Component of the F(0) channel, it forms part of the peripheral stalk, linking F(1) to F(0). The chain is ATP synthase subunit b from Haemophilus influenzae (strain PittGG).